Reading from the N-terminus, the 274-residue chain is Diaminopimelate epimerase (274 aa).

The substrate site is built by Asn11, Gln44, and Asn64. Catalysis depends on Cys73, which acts as the Proton donor. Residues 74–75 (GN), Asn157, Asn190, and 208–209 (ER) contribute to the substrate site. Cys217 (proton acceptor) is an active-site residue. Substrate is bound at residue 218–219 (GS).

It belongs to the diaminopimelate epimerase family. Homodimer.

It is found in the cytoplasm. The enzyme catalyses (2S,6S)-2,6-diaminopimelate = meso-2,6-diaminopimelate. The protein operates within amino-acid biosynthesis; L-lysine biosynthesis via DAP pathway; DL-2,6-diaminopimelate from LL-2,6-diaminopimelate: step 1/1. Functionally, catalyzes the stereoinversion of LL-2,6-diaminopimelate (L,L-DAP) to meso-diaminopimelate (meso-DAP), a precursor of L-lysine and an essential component of the bacterial peptidoglycan. The protein is Diaminopimelate epimerase of Escherichia coli O127:H6 (strain E2348/69 / EPEC).